The primary structure comprises 314 residues: Epithelial-stromal interaction protein 1 (314 aa).

Disordered stretches follow at residues 1-72 (MYTR…PNES), 227-272 (WAGS…RAQI), and 289-314 (QGKSQPGGLEQSGGCCNMNSTDSWGL). A compositionally biased stretch (basic and acidic residues) spans 18 to 30 (SRDHAGAGQRREL). Ser-39 carries the phosphoserine modification. Residues 71 to 180 (ESRRQKIQRI…QEDIRRATFR (110 aa)) adopt a coiled-coil conformation. A compositionally biased stretch (basic and acidic residues) spans 232 to 272 (AHRDSPQKEDNPRLQKTRDGHQKNKLLETKGQHQEEERAQI). Over residues 305 to 314 (NMNSTDSWGL) the composition is skewed to polar residues.

As to expression, expressed in the spleen, with expression in T cells, B cells, natural killer cells and natural killer T cells and high expression in monocytes and macrophages.

Functionally, plays a role in M1 macrophage polarization and is required for the proper regulation of gene expression during M1 versus M2 macrophage differentiation. Might play a role in RELA/p65 and STAT1 phosphorylation and nuclear localization upon activation of macrophages. This is Epithelial-stromal interaction protein 1 (Epsti1) from Mus musculus (Mouse).